The sequence spans 94 residues: Ribonuclease P protein component 1 (94 aa).

This sequence belongs to the eukaryotic/archaeal RNase P protein component 1 family. In terms of assembly, consists of a catalytic RNA component and at least 4-5 protein subunits.

The protein resides in the cytoplasm. The enzyme catalyses Endonucleolytic cleavage of RNA, removing 5'-extranucleotides from tRNA precursor.. Part of ribonuclease P, a protein complex that generates mature tRNA molecules by cleaving their 5'-ends. The polypeptide is Ribonuclease P protein component 1 (Haloarcula marismortui (strain ATCC 43049 / DSM 3752 / JCM 8966 / VKM B-1809) (Halobacterium marismortui)).